The following is a 791-amino-acid chain: Ataxin-1 (791 aa).

The segment covering methionine 1–alanine 30 has biased composition (basic and acidic residues). A disordered region spans residues methionine 1–aspartate 36. A Glycyl lysine isopeptide (Lys-Gly) (interchain with G-Cter in SUMO) cross-link involves residue lysine 16. Phosphoserine occurs at positions 81 and 87. 2 disordered regions span residues serine 187–proline 240 and glutamate 298–tyrosine 402. Lysine 193 participates in a covalent cross-link: Glycyl lysine isopeptide (Lys-Gly) (interchain with G-Cter in SUMO). Serine 213 carries the phosphoserine modification. Threonine 218 carries the phosphothreonine modification. Polar residues-rich tracts occupy residues glutamine 219–alanine 236, alanine 312–serine 327, and proline 362–aspartate 388. Serine 229 bears the Phosphoserine mark. The self-association stretch occupies residues valine 470–isoleucine 580. The interaction with USP7 stretch occupies residues leucine 514–lysine 791. Positions threonine 516–proline 742 are RNA-binding. The AXH domain maps to serine 538–glycine 669. Residues lysine 585, lysine 672, and lysine 721 each participate in a glycyl lysine isopeptide (Lys-Gly) (interchain with G-Cter in SUMO) cross-link. The interval lysine 736–leucine 774 is disordered. A Phosphoserine modification is found at serine 751. The Nuclear localization signal motif lies at proline 770–serine 773.

Belongs to the ATXN1 family. As to quaternary structure, homooligomer. Interacts with PQBP1, UBQLN4 and USP7. Interacts with ANP32A. Interacts with CIC. Directly interacts with RBPJ; this interaction is disrupted in the presence of Notch intracellular domain. Interacts with ATXN1L; competes with ATXN1L for RBPJ-binding. Found in a complex with CIC and ATXN1L. Post-translationally, ubiquitinated by UBE3A, leading to its degradation by the proteasome. The presence of poly-Gln repeats in trangenic models developed to replicate phenotypes of the spinocerebellar ataxia 1 disease (SCA1) impair ubiquitination and degradation, leading to accumulation of Atxn1 in neurons and subsequent toxicity. Sumoylation is dependent on nuclear localization and phosphorylation at Ser-751. As to expression, expressed in the cortex and hypothalamus (at protein level). Widely expressed. In brain, the pattern of distribution is limited to neuron populations.

It localises to the cytoplasm. The protein localises to the nucleus. Chromatin-binding factor that repress Notch signaling in the absence of Notch intracellular domain by acting as a CBF1 corepressor. Binds to the HEY promoter and might assist, along with NCOR2, RBPJ-mediated repression. May be involved in RNA metabolism. In concert with CIC and ATXN1L, involved in brain development. The sequence is that of Ataxin-1 (Atxn1) from Mus musculus (Mouse).